Consider the following 330-residue polypeptide: Peptide transport system ATP-binding protein SapD (330 aa).

Residues 6 to 259 (IRNLTIEFKT…PHHPYTQALI (254 aa)) form the ABC transporter domain. 40–47 (GESGSGKS) is a binding site for ATP.

It belongs to the ABC transporter superfamily.

Its subcellular location is the cell inner membrane. Functionally, involved in a peptide intake transport system that plays a role in the resistance to antimicrobial peptides. This chain is Peptide transport system ATP-binding protein SapD, found in Salmonella typhimurium (strain LT2 / SGSC1412 / ATCC 700720).